Reading from the N-terminus, the 412-residue chain is MAFLCQRDSYAREFTTTVVSCCPAELQTDGNGSKKEVLSGFQVVLEDTLLFPEGGGQPDDRGTINDISVLRVTRRGAQADHFTQTPLSPGSQVQVRVDWERRFDHMQQHSGQHLITAVADLLFGLKTTSWELGKLRCVIELDSPSVTAEQVAAIEQSVNQKIRDRLPVSVRELSLDDPEVEQVRGRGLPDDHAGPIRVVTIEGVDSNMCCGTHVNNLSDLQVIKILGTEKGKKNKSNLIFLAGNRVLKWMERSHGSEKALTSLLKCGAEDHVEAVKKLQNATKLLQKNNLNLLRDLAVHTAHTLRSSPAWGGVVTLHRKEGDSEFMNIIANEIGSEETLLFLTVGDEKGAGLFLLAGPTEAVETLGPRVAEVLEGKGAGKKGRFQGKATKMSRRAEVQALLQDYVSTQSAEE.

Histidine 109 and histidine 113 together coordinate Zn(2+). Serine 174 carries the post-translational modification Phosphoserine. Residues cysteine 209 and histidine 213 each coordinate Zn(2+).

This sequence belongs to the class-II aminoacyl-tRNA synthetase family. Alax-L subfamily. Zn(2+) serves as cofactor.

The protein resides in the cytoplasm. Functions in trans to edit the amino acid moiety from incorrectly charged tRNA(Ala). This Rattus norvegicus (Rat) protein is Alanyl-tRNA editing protein Aarsd1 (Aarsd1).